The following is a 439-amino-acid chain: ATP-dependent RNA helicase RhlB (439 aa).

The Q motif signature appears at 9-37 (QKFADLPLHPEVKQALAENGFEFCTPIQA). The Helicase ATP-binding domain occupies 40-219 (LPVLLQSKDI…YDHMNDPVKV (180 aa)). Position 53 to 60 (53 to 60 (AQTGTGKT)) interacts with ATP. The DEAD box signature appears at 165-168 (DEAD). The Helicase C-terminal domain occupies 243 to 390 (KMRLLLTLIE…VSNYDRDALL (148 aa)). Positions 395-439 (SPVKIHRKHPAGARNLRERSGAGRTPGAHRSGGRPPRHDRTRRQP) are disordered. The segment covering 425–439 (SGGRPPRHDRTRRQP) has biased composition (basic residues).

The protein belongs to the DEAD box helicase family. RhlB subfamily. As to quaternary structure, component of the RNA degradosome, which is a multiprotein complex involved in RNA processing and mRNA degradation.

It is found in the cytoplasm. The catalysed reaction is ATP + H2O = ADP + phosphate + H(+). Functionally, DEAD-box RNA helicase involved in RNA degradation. Has RNA-dependent ATPase activity and unwinds double-stranded RNA. This chain is ATP-dependent RNA helicase RhlB, found in Shewanella oneidensis (strain ATCC 700550 / JCM 31522 / CIP 106686 / LMG 19005 / NCIMB 14063 / MR-1).